We begin with the raw amino-acid sequence, 125 residues long: Somatostatin-2 (125 aa).

Positions 1 to 24 are cleaved as a signal peptide; sequence MQCIRCPAILALLALVLCGPSVSS. Gln25 is subject to Pyrrolidone carboxylic acid. The propeptide occupies 25 to 97; sequence QLDREQSDNQ…ATGGRMNLER (73 aa). The segment at 82–107 is disordered; the sequence is AEDASMATGGRMNLERSVDSTNNLPP. An intrachain disulfide couples Cys114 to Cys125. At Lys120 the chain carries 5-hydroxylysine.

The protein belongs to the somatostatin family.

Its subcellular location is the secreted. Functionally, somatostatin inhibits the release of somatotropin. This Lophius americanus (American angler) protein is Somatostatin-2 (sst2).